The sequence spans 420 residues: Sodium/proton antiporter 2 (420 aa).

A run of 11 helical transmembrane segments spans residues 25 to 45 (IALL…SVEI), 60 to 80 (IVFY…HQGF), 94 to 114 (ILLW…DNLT), 136 to 156 (LGAV…IGDV), 173 to 193 (IKNL…LMSL), 221 to 241 (LVFG…SLTG), 242 to 262 (LPPY…TDVI), 285 to 305 (GALF…AGIL), 321 to 341 (LIAS…LVAA), 363 to 383 (FCAG…VIFM), and 400 to 420 (FAFA…NFPL).

The protein belongs to the NhaD Na(+)/H(+) (TC 2.A.62) antiporter family.

It localises to the membrane. Na(+)/H(+) antiporter that extrudes sodium in exchange for external protons. The protein is Sodium/proton antiporter 2 of Arabidopsis thaliana (Mouse-ear cress).